Consider the following 535-residue polypeptide: Inositol 1,4,5-trisphosphate receptor-interacting protein-like 2 (535 aa).

The signal sequence occupies residues 1 to 32 (MSVRYTLNLRVFWPLVTGLCTALVCLYHALRS). Over 33–43 (SEDARAESPDG) the chain is Extracellular. Residues 44-64 (ADSGFPLLKVAILLLLGYILL) form a helical membrane-spanning segment. At 65-535 (RCRHAIRQRL…RIQGSPEDEP (471 aa)) the chain is on the cytoplasmic side. Phosphoserine is present on serine 139.

The protein belongs to the ITPRIP family.

The protein localises to the membrane. The sequence is that of Inositol 1,4,5-trisphosphate receptor-interacting protein-like 2 (Itpripl2) from Mus musculus (Mouse).